The chain runs to 137 residues: Small ribosomal subunit protein uS9c (137 aa).

The protein belongs to the universal ribosomal protein uS9 family.

The protein resides in the plastid. It localises to the chloroplast. The chain is Small ribosomal subunit protein uS9c (rps9) from Mesostigma viride (Green alga).